The following is a 445-amino-acid chain: 6-phosphogluconate dehydrogenase, decarboxylating (445 aa).

NADP(+) is bound by residues 1–4 (AVMG), 22–24 (NRS), 63–65 (VKA), and Asn91. Substrate-binding positions include Asn91 and 117 to 119 (SGG). The active-site Proton acceptor is the Lys172. 175–176 (HN) lines the substrate pocket. Glu179 serves as the catalytic Proton donor. Positions 180, 249, 276, 434, and 440 each coordinate substrate.

Belongs to the 6-phosphogluconate dehydrogenase family. As to quaternary structure, homodimer.

The catalysed reaction is 6-phospho-D-gluconate + NADP(+) = D-ribulose 5-phosphate + CO2 + NADPH. It participates in carbohydrate degradation; pentose phosphate pathway; D-ribulose 5-phosphate from D-glucose 6-phosphate (oxidative stage): step 3/3. Catalyzes the oxidative decarboxylation of 6-phosphogluconate to ribulose 5-phosphate and CO(2), with concomitant reduction of NADP to NADPH. This is 6-phosphogluconate dehydrogenase, decarboxylating (gnd) from Shigella boydii.